Consider the following 128-residue polypeptide: Large ribosomal subunit protein uL22 (128 aa).

This sequence belongs to the universal ribosomal protein uL22 family. In terms of assembly, part of the 50S ribosomal subunit.

Its function is as follows. This protein binds specifically to 23S rRNA; its binding is stimulated by other ribosomal proteins, e.g. L4, L17, and L20. It is important during the early stages of 50S assembly. It makes multiple contacts with different domains of the 23S rRNA in the assembled 50S subunit and ribosome. In terms of biological role, the globular domain of the protein is located near the polypeptide exit tunnel on the outside of the subunit, while an extended beta-hairpin is found that lines the wall of the exit tunnel in the center of the 70S ribosome. This chain is Large ribosomal subunit protein uL22, found in Prochlorococcus marinus (strain AS9601).